Here is a 673-residue protein sequence, read N- to C-terminus: Armadillo repeat-containing protein 8 (673 aa).

Ala2 is modified (N-acetylalanine). ARM repeat units lie at residues 51–92 (NKQK…SLAM), 95–134 (ENNVKSLLDCHIIPALLQGLLSPDLKFIEACLRCLRTIFT), 138–176 (TPEELLYTDATVIPHLMALLSRSRYTQEYICQIFSHCCK), 178–217 (PDHQTILFNHGAVQNIAHLLTSLSYKVRMQALKCFSVLAF), 224–265 (MTLV…YMCR), 269–309 (IRTD…YLIE), 313–352 (ELQRIASITDHLIAMLADYFKYPSSVSAITDIKRLDHDLK), 374–413 (DIRKKIIETENMMDRIVTGLSESSVKVRLAAVRCLHSLSR), 416–455 (QQLRTSFQDHAVWKPLMKVLQNAPDEILVVASSMLCNLLL), 458–497 (SPSKEPILESGAVELLCGLTQSENPALRVNGIWALMNMAF), 501–540 (QKIKADILRSLSTEQLFRLLSDSDLNVLMKTLGLLRNLLS), 543–585 (PHID…NIAD), 588–627 (TAKDLIMTNDDILQKIKYYMGHSHVKLQLAAMFCISNLIW), and 634–673 (QERQDKLRDMGIVDILHKLSQSPDSNLCDKAKMALQQYLA). Phosphoserine is present on Ser337. A Phosphoserine modification is found at Ser512.

As to quaternary structure, identified in the CTLH complex that contains GID4, RANBP9 and/or RANBP10, MKLN1, MAEA, RMND5A (or alternatively its paralog RMND5B), GID8, ARMC8, WDR26 and YPEL5. Within this complex, MAEA, RMND5A (or alternatively its paralog RMND5B), GID8, WDR26, and RANBP9 and/or RANBP10 form the catalytic core, while GID4, MKLN1, ARMC8 and YPEL5 have ancillary roles.

It localises to the nucleus. Its subcellular location is the cytoplasm. In terms of biological role, component of the CTLH E3 ubiquitin-protein ligase complex that selectively accepts ubiquitin from UBE2H and mediates ubiquitination and subsequent proteasomal degradation of the transcription factor HBP1. This Homo sapiens (Human) protein is Armadillo repeat-containing protein 8 (ARMC8).